A 349-amino-acid polypeptide reads, in one-letter code: 4-hydroxy-2-oxovalerate aldolase 1 (349 aa).

One can recognise a Pyruvate carboxyltransferase domain in the interval 9–261 (ITVHDMTLRD…ATGVDVFRIQ (253 aa)). Position 17-18 (17-18 (RD)) interacts with substrate. Position 18 (D18) interacts with Mn(2+). Catalysis depends on H21, which acts as the Proton acceptor. Residues S171 and H200 each coordinate substrate. The Mn(2+) site is built by H200 and H202. A substrate-binding site is contributed by Y291.

Belongs to the 4-hydroxy-2-oxovalerate aldolase family.

It carries out the reaction (S)-4-hydroxy-2-oxopentanoate = acetaldehyde + pyruvate. This chain is 4-hydroxy-2-oxovalerate aldolase 1, found in Methylibium petroleiphilum (strain ATCC BAA-1232 / LMG 22953 / PM1).